A 451-amino-acid polypeptide reads, in one-letter code: UPF0210 protein LMHCC_2097 (451 aa).

This sequence belongs to the UPF0210 family. In terms of assembly, homodimer.

In Listeria monocytogenes serotype 4a (strain HCC23), this protein is UPF0210 protein LMHCC_2097.